The primary structure comprises 151 residues: MKQIELKILDPRIGKEFPLPEHATAGSAGMDLRACIDQALIIKPGETQLIPTGIAIHISDPGLAATILPRSGLGHKHGIVLGNLVGLIDSDYQGPLMVSCWNRSTESFRLEPGERLAQLVFLPVVQATFEIVDEFKSSERGEGGFGHSGKH.

Substrate-binding positions include 70-72 (RSG), Asn83, 87-89 (LID), and Met97.

Belongs to the dUTPase family. It depends on Mg(2+) as a cofactor.

The catalysed reaction is dUTP + H2O = dUMP + diphosphate + H(+). It functions in the pathway pyrimidine metabolism; dUMP biosynthesis; dUMP from dCTP (dUTP route): step 2/2. Functionally, this enzyme is involved in nucleotide metabolism: it produces dUMP, the immediate precursor of thymidine nucleotides and it decreases the intracellular concentration of dUTP so that uracil cannot be incorporated into DNA. The protein is Deoxyuridine 5'-triphosphate nucleotidohydrolase of Psychromonas ingrahamii (strain DSM 17664 / CCUG 51855 / 37).